The chain runs to 481 residues: UDP-N-acetylmuramoyl-L-alanyl-D-glutamate--L-lysine ligase (481 aa).

Ser-42 serves as a coordination point for UDP-N-acetyl-alpha-D-muramoyl-L-alanyl-D-glutamate. ATP is bound at residue 118–124; that stretch reads GTKGKTT. Residues 160 to 161, Ser-187, and Arg-195 each bind UDP-N-acetyl-alpha-D-muramoyl-L-alanyl-D-glutamate; that span reads TT. At Lys-229 the chain carries N6-carboxylysine. The short motif at 404–407 is the L-lysine recognition motif element; that stretch reads DDPN.

The protein belongs to the MurCDEF family. MurE subfamily. Post-translationally, carboxylation is probably crucial for Mg(2+) binding and, consequently, for the gamma-phosphate positioning of ATP.

It localises to the cytoplasm. The catalysed reaction is UDP-N-acetyl-alpha-D-muramoyl-L-alanyl-D-glutamate + L-lysine + ATP = UDP-N-acetyl-alpha-D-muramoyl-L-alanyl-gamma-D-glutamyl-L-lysine + ADP + phosphate + H(+). It participates in cell wall biogenesis; peptidoglycan biosynthesis. Its function is as follows. Catalyzes the addition of L-lysine to the nucleotide precursor UDP-N-acetylmuramoyl-L-alanyl-D-glutamate (UMAG) in the biosynthesis of bacterial cell-wall peptidoglycan. The protein is UDP-N-acetylmuramoyl-L-alanyl-D-glutamate--L-lysine ligase of Streptococcus pneumoniae (strain ATCC BAA-255 / R6).